The primary structure comprises 84 residues: Small ribosomal subunit protein uS17 (84 aa).

It belongs to the universal ribosomal protein uS17 family. As to quaternary structure, part of the 30S ribosomal subunit.

Its function is as follows. One of the primary rRNA binding proteins, it binds specifically to the 5'-end of 16S ribosomal RNA. In Clostridium botulinum (strain 657 / Type Ba4), this protein is Small ribosomal subunit protein uS17.